A 185-amino-acid polypeptide reads, in one-letter code: PXMP2/4 family protein 4 (185 aa).

3 helical membrane passes run M63–D83, I100–L120, and V141–I161.

It belongs to the peroxisomal membrane protein PXMP2/4 family.

The protein localises to the membrane. This chain is PXMP2/4 family protein 4, found in Dictyostelium discoideum (Social amoeba).